Consider the following 391-residue polypeptide: Phosphoglycerate kinase (391 aa).

Substrate contacts are provided by residues 21–23, arginine 36, 59–62, arginine 113, and arginine 146; these read DLN and HLGR. ATP-binding positions include lysine 197, glutamate 319, and 345-348; that span reads GGDT.

Belongs to the phosphoglycerate kinase family. Monomer.

The protein resides in the cytoplasm. The enzyme catalyses (2R)-3-phosphoglycerate + ATP = (2R)-3-phospho-glyceroyl phosphate + ADP. It functions in the pathway carbohydrate degradation; glycolysis; pyruvate from D-glyceraldehyde 3-phosphate: step 2/5. The chain is Phosphoglycerate kinase from Shewanella baltica (strain OS155 / ATCC BAA-1091).